The sequence spans 713 residues: Fibroblast growth factor receptor 4 (713 aa).

Residues 1 to 20 (MLPLWLVLAGLLLAVGPAAS) form the signal peptide. The segment at 21–54 (HRGEMEPDSLASGDDDEDSDGDGPHGDRSEEPVY) is disordered. At 21–281 (HRGEMEPDSL…AETSEAKYTD (261 aa)) the chain is on the extracellular side. The segment covering 42–54 (DGPHGDRSEEPVY) has biased composition (basic and acidic residues). 2 Ig-like C2-type domains span residues 59 to 152 (PYWT…YLLD) and 161 to 261 (PILQ…AWLT). A disulfide bridge links cysteine 84 with cysteine 136. N-linked (GlcNAc...) asparagine glycans are attached at residues asparagine 133, asparagine 170, asparagine 202, asparagine 223, and asparagine 234. Cysteine 183 and cysteine 245 form a disulfide bridge. The chain crosses the membrane as a helical span at residues 282 to 302 (IIIYTSGSLAVAMALIIVVLC). The Cytoplasmic portion of the chain corresponds to 303–713 (RMQTQSSKQP…CLFSCPSGRT (411 aa)). Residues 379-667 (LVLGKPLGEG…ILAAISEEYL (289 aa)) form the Protein kinase domain. Residues 385–393 (LGEGCFGQV) and lysine 415 each bind ATP. Aspartate 524 serves as the catalytic Proton acceptor. Tyrosine 554, tyrosine 555, and tyrosine 666 each carry phosphotyrosine; by autocatalysis.

This sequence belongs to the protein kinase superfamily. Tyr protein kinase family. Fibroblast growth factor receptor subfamily. As to quaternary structure, monomer. Homodimer after ligand binding. Interacts with FGF1, FGF2, FGF4, FGF6, FGF8, FGF9, FGF16, FGF17, FGF18, FGF19, FGF21 and FGF23 (in vitro). Binding affinity for FGF family members is enhanced by interactions between FGFs and heparan sulfate proteoglycans. Interacts with KLB; this strongly increases the affinity for FGF19 and FGF23. Affinity for FGF19 is strongly increased by KLB and sulfated glycosaminoglycans. KLB and KL both interact with the core-glycosylated FGFR4 in the endoplasmic reticulum and promote its degradation, so that only FGFR4 with fully mature N-glycans is expressed at the cell surface. Identified in a complex with NCAM1, CDH2, PLCG1, FRS2, SRC, SHC1, GAP43 and CTTN. Interacts with MMP14 and HIP1. Interacts with STAT3. In terms of processing, N-glycosylated. Full maturation of the glycan chains in the Golgi is essential for high affinity interaction with FGF19. Ubiquitinated. Subject to proteasomal degradation when not fully glycosylated. Post-translationally, autophosphorylated. Binding of FGF family members together with heparan sulfate proteoglycan or heparin promotes receptor dimerization and autophosphorylation on tyrosine residues. Autophosphorylation occurs in trans between the two FGFR molecules present in the dimer.

It is found in the cell membrane. It localises to the endosome. The protein localises to the endoplasmic reticulum. It carries out the reaction L-tyrosyl-[protein] + ATP = O-phospho-L-tyrosyl-[protein] + ADP + H(+). Present in an inactive conformation in the absence of bound ligand. Ligand binding leads to dimerization and activation by autophosphorylation on tyrosine residues. Functionally, tyrosine-protein kinase that acts as a cell-surface receptor for fibroblast growth factors and plays a role in the regulation of cell proliferation, differentiation and migration, and in regulation of lipid metabolism, bile acid biosynthesis, glucose uptake, vitamin D metabolism and phosphate homeostasis. Required for normal down-regulation of the expression of CYP7A1, the rate-limiting enzyme in bile acid synthesis, in response to FGF19. Phosphorylates PLCG1 and FRS2. Ligand binding leads to the activation of several signaling cascades. Activation of PLCG1 leads to the production of the cellular signaling molecules diacylglycerol and inositol 1,4,5-trisphosphate. Phosphorylation of FRS2 triggers recruitment of GRB2, GAB1, PIK3R1 and SOS1, and mediates activation of RAS, MAPK1/ERK2, MAPK3/ERK1 and the MAP kinase signaling pathway, as well as of the AKT1 signaling pathway. Promotes SRC-dependent phosphorylation of the matrix protease MMP14 and its lysosomal degradation. FGFR4 signaling is down-regulated by receptor internalization and degradation; MMP14 promotes internalization and degradation of FGFR4. This Coturnix coturnix (Common quail) protein is Fibroblast growth factor receptor 4 (FGFR4).